Here is a 544-residue protein sequence, read N- to C-terminus: Chaperonin GroEL (544 aa).

ATP is bound by residues 30-33 (TLGP), Lys51, 87-91 (DGTTT), Gly415, 481-483 (DAL), and Asp497.

The protein belongs to the chaperonin (HSP60) family. As to quaternary structure, forms a cylinder of 14 subunits composed of two heptameric rings stacked back-to-back. Interacts with the co-chaperonin GroES.

Its subcellular location is the cytoplasm. It carries out the reaction ATP + H2O + a folded polypeptide = ADP + phosphate + an unfolded polypeptide.. Together with its co-chaperonin GroES, plays an essential role in assisting protein folding. The GroEL-GroES system forms a nano-cage that allows encapsulation of the non-native substrate proteins and provides a physical environment optimized to promote and accelerate protein folding. This is Chaperonin GroEL from Chlamydia muridarum (strain MoPn / Nigg).